Here is a 731-residue protein sequence, read N- to C-terminus: Fatty acid oxidation complex subunit alpha (731 aa).

Positions 15-204 are enoyl-CoA hydratase; sequence TEKTSAFSLT…RQGLVDEAVP (190 aa). The 3-hydroxyacyl-CoA dehydrogenase stretch occupies residues 320–729; the sequence is KPIHRVGILG…FYPPADKDNS (410 aa).

The protein in the N-terminal section; belongs to the enoyl-CoA hydratase/isomerase family. This sequence in the central section; belongs to the 3-hydroxyacyl-CoA dehydrogenase family. In terms of assembly, heterotetramer of two alpha chains (FadJ) and two beta chains (FadI).

It is found in the cytoplasm. It carries out the reaction a (3S)-3-hydroxyacyl-CoA = a (2E)-enoyl-CoA + H2O. It catalyses the reaction a 4-saturated-(3S)-3-hydroxyacyl-CoA = a (3E)-enoyl-CoA + H2O. The catalysed reaction is a (3S)-3-hydroxyacyl-CoA + NAD(+) = a 3-oxoacyl-CoA + NADH + H(+). The enzyme catalyses (3S)-3-hydroxybutanoyl-CoA = (3R)-3-hydroxybutanoyl-CoA. It functions in the pathway lipid metabolism; fatty acid beta-oxidation. In terms of biological role, catalyzes the formation of a hydroxyacyl-CoA by addition of water on enoyl-CoA. Also exhibits 3-hydroxyacyl-CoA epimerase and 3-hydroxyacyl-CoA dehydrogenase activities. The chain is Fatty acid oxidation complex subunit alpha from Pectobacterium atrosepticum (strain SCRI 1043 / ATCC BAA-672) (Erwinia carotovora subsp. atroseptica).